The sequence spans 356 residues: S-adenosylmethionine:tRNA ribosyltransferase-isomerase (356 aa).

Belongs to the QueA family. Monomer.

Its subcellular location is the cytoplasm. It carries out the reaction 7-aminomethyl-7-carbaguanosine(34) in tRNA + S-adenosyl-L-methionine = epoxyqueuosine(34) in tRNA + adenine + L-methionine + 2 H(+). It functions in the pathway tRNA modification; tRNA-queuosine biosynthesis. In terms of biological role, transfers and isomerizes the ribose moiety from AdoMet to the 7-aminomethyl group of 7-deazaguanine (preQ1-tRNA) to give epoxyqueuosine (oQ-tRNA). The chain is S-adenosylmethionine:tRNA ribosyltransferase-isomerase from Nitrosospira multiformis (strain ATCC 25196 / NCIMB 11849 / C 71).